The primary structure comprises 654 residues: Protein SERAC1 (654 aa).

The helical transmembrane segment at 32–54 (NIIKFTGSLILGGSLFLTYEVLA) threads the bilayer.

This sequence belongs to the SERAC1 family. Widely expressed, with predominant expression in skeletal muscle and brain. In the brain, highest levels are found in the frontal and occipital cortices, cerebellum and hippocampus.

Its subcellular location is the mitochondrion membrane. It is found in the endoplasmic reticulum. The protein resides in the mitochondrion. Facilitates the transport of serine from the cytosol to the mitochondria by interacting with and stabilizing Sideroflexin-1 (SFXN1), a mitochondrial serine transporter, playing a fundamental role in the one-carbon cycle responsible for the synthesis of nucleotides needed for mitochondrial DNA replication. Plays an important role in the phosphatidylglycerol (PG) remodeling that is essential for both mitochondrial function and intracellular cholesterol trafficking. Specifically involved in the exchange of the sn-1 acyl chain from PG 16:0/18:1(9Z) (also known as 1-hexadecanoyl-2-(9Z-octadecenoyl)-sn-glycero-3-phospho-(1'-sn-glycerol)) to PG 18:0/18:1(9Z) (also known as 1-octadecanoyl-2-(9Z-octadecenoyl)-sn-glycero-3-phospho-(1'-sn-glycerol)), a step needed in the bis(monoacylglycerol)phosphate biosynthetic pathway. May have acyltransferase activity although the mechanism for PG remodeling has not been determined. In Homo sapiens (Human), this protein is Protein SERAC1 (SERAC1).